Consider the following 559-residue polypeptide: Sesquiterpene synthase TPS3 (559 aa).

Arg275, Asp312, Asp316, Arg453, and Asp456 together coordinate (2E,6E)-farnesyl diphosphate. Positions 312 and 316 each coordinate Mg(2+). Residues 312–316 (DDTYD) carry the DDXXD motif motif. Mg(2+) is bound by residues Asp456, Thr460, and Glu464.

Belongs to the terpene synthase family. Tpsa subfamily. In terms of assembly, monomer. It depends on Mg(2+) as a cofactor. In terms of tissue distribution, highly expressed in glandular trichomes. Expressed in roots and leaves.

It is found in the cytoplasm. The enzyme catalyses (2E,6E)-farnesyl diphosphate = (+)-(R)-germacrene A + diphosphate. It participates in secondary metabolite biosynthesis; terpenoid biosynthesis. Functionally, sesquiterpene synthase involved in the biosynthesis of volatile compounds. Mediates the conversion of (2E,6E)-farnesyl diphosphate (FPP) into (+)-(R)-germacrene A. In Xanthium strumarium (Rough cocklebur), this protein is Sesquiterpene synthase TPS3.